The chain runs to 469 residues: Ribulose bisphosphate carboxylase large chain (469 aa).

Positions M1–S2 are excised as a propeptide. P3 bears the N-acetylproline mark. At K14 the chain carries N6,N6,N6-trimethyllysine. 2 residues coordinate substrate: N123 and T173. The Proton acceptor role is filled by K175. Position 177 (K177) interacts with substrate. 3 residues coordinate Mg(2+): K201, D203, and E204. K201 carries the post-translational modification N6-carboxylysine. The active-site Proton acceptor is the H294. Positions 295, 327, and 379 each coordinate substrate.

This sequence belongs to the RuBisCO large chain family. Type I subfamily. As to quaternary structure, heterohexadecamer of 8 large chains and 8 small chains; disulfide-linked. The disulfide link is formed within the large subunit homodimers. Mg(2+) is required as a cofactor. In terms of processing, the disulfide bond which can form in the large chain dimeric partners within the hexadecamer appears to be associated with oxidative stress and protein turnover.

The protein localises to the plastid. Its subcellular location is the chloroplast. The catalysed reaction is 2 (2R)-3-phosphoglycerate + 2 H(+) = D-ribulose 1,5-bisphosphate + CO2 + H2O. It carries out the reaction D-ribulose 1,5-bisphosphate + O2 = 2-phosphoglycolate + (2R)-3-phosphoglycerate + 2 H(+). In terms of biological role, ruBisCO catalyzes two reactions: the carboxylation of D-ribulose 1,5-bisphosphate, the primary event in carbon dioxide fixation, as well as the oxidative fragmentation of the pentose substrate in the photorespiration process. Both reactions occur simultaneously and in competition at the same active site. The chain is Ribulose bisphosphate carboxylase large chain from Iris ensata (Japanese iris).